A 78-amino-acid chain; its full sequence is Acyl carrier protein (78 aa).

One can recognise a Carrier domain in the interval 2 to 77; the sequence is SDTAERVKKI…DAVKYIEKAT (76 aa). Residue Ser37 is modified to O-(pantetheine 4'-phosphoryl)serine.

Belongs to the acyl carrier protein (ACP) family. Post-translationally, 4'-phosphopantetheine is transferred from CoA to a specific serine of apo-ACP by AcpS. This modification is essential for activity because fatty acids are bound in thioester linkage to the sulfhydryl of the prosthetic group.

Its subcellular location is the cytoplasm. It functions in the pathway lipid metabolism; fatty acid biosynthesis. Functionally, carrier of the growing fatty acid chain in fatty acid biosynthesis. The chain is Acyl carrier protein from Chelativorans sp. (strain BNC1).